Here is a 369-residue protein sequence, read N- to C-terminus: 4-hydroxy-3-methylbut-2-en-1-yl diphosphate synthase (flavodoxin) (369 aa).

[4Fe-4S] cluster contacts are provided by Cys270, Cys273, Cys305, and Glu312.

It belongs to the IspG family. The cofactor is [4Fe-4S] cluster.

The catalysed reaction is (2E)-4-hydroxy-3-methylbut-2-enyl diphosphate + oxidized [flavodoxin] + H2O + 2 H(+) = 2-C-methyl-D-erythritol 2,4-cyclic diphosphate + reduced [flavodoxin]. Its pathway is isoprenoid biosynthesis; isopentenyl diphosphate biosynthesis via DXP pathway; isopentenyl diphosphate from 1-deoxy-D-xylulose 5-phosphate: step 5/6. Its function is as follows. Converts 2C-methyl-D-erythritol 2,4-cyclodiphosphate (ME-2,4cPP) into 1-hydroxy-2-methyl-2-(E)-butenyl 4-diphosphate. This chain is 4-hydroxy-3-methylbut-2-en-1-yl diphosphate synthase (flavodoxin), found in Pseudomonas fluorescens (strain ATCC BAA-477 / NRRL B-23932 / Pf-5).